Reading from the N-terminus, the 257-residue chain is MPYLYRVAYDGALFHGFTGHSNSVEAALRRVFGHLLGRGSRTDPGVSAVGNAVLAPSRLPLGYINSRLPRGVWTWAVAEVGEGFNPRRARRRRYLYVAPHWGEDVEAMREVAELFKGTHDFSSFIQFRGERGTPPVTTVDEVGVEVAGRLVYLYFVGKGFRNKQIRKMAWAILAAGRGVVSRRYVEELLERPRPGAVPSAPAEGLILLDIEYDVKFDVDRGELRKAYVYFLEKYRRLEALAAAYRAAGERLLFYDDL.

Residue Asp43 is the Nucleophile of the active site. Tyr94 is a binding site for substrate.

This sequence belongs to the tRNA pseudouridine synthase TruA family.

It carries out the reaction uridine(38/39/40) in tRNA = pseudouridine(38/39/40) in tRNA. Formation of pseudouridine at positions 38, 39 and 40 in the anticodon stem and loop of transfer RNAs. The protein is tRNA pseudouridine synthase A of Pyrobaculum calidifontis (strain DSM 21063 / JCM 11548 / VA1).